The primary structure comprises 195 residues: Putative archaetidylserine decarboxylase proenzyme (195 aa).

Serine 159 functions as the Schiff-base intermediate with substrate; via pyruvic acid in the catalytic mechanism. Serine 159 is subject to Pyruvic acid (Ser); by autocatalysis.

The protein belongs to the phosphatidylserine decarboxylase family. PSD-A subfamily. Heterodimer of a large membrane-associated beta subunit and a small pyruvoyl-containing alpha subunit. The cofactor is pyruvate. Post-translationally, is synthesized initially as an inactive proenzyme. Formation of the active enzyme involves a self-maturation process in which the active site pyruvoyl group is generated from an internal serine residue via an autocatalytic post-translational modification. Two non-identical subunits are generated from the proenzyme in this reaction, and the pyruvate is formed at the N-terminus of the alpha chain, which is derived from the carboxyl end of the proenzyme. The autoendoproteolytic cleavage occurs by a canonical serine protease mechanism, in which the side chain hydroxyl group of the serine supplies its oxygen atom to form the C-terminus of the beta chain, while the remainder of the serine residue undergoes an oxidative deamination to produce ammonia and the pyruvoyl prosthetic group on the alpha chain. During this reaction, the Ser that is part of the protease active site of the proenzyme becomes the pyruvoyl prosthetic group, which constitutes an essential element of the active site of the mature decarboxylase. In terms of processing, is synthesized initially as an inactive proenzyme. Formation of the active enzyme involves a self-maturation process in which the active site pyruvoyl group is generated from an internal serine residue via an autocatalytic post-translational modification. Two non-identical subunits are generated from the proenzyme in this reaction, and the pyruvate is formed at the N-terminus of the alpha chain, which is derived from the carboxyl end of the proenzyme. The post-translation cleavage follows an unusual pathway, termed non-hydrolytic serinolysis, in which the side chain hydroxyl group of the serine supplies its oxygen atom to form the C-terminus of the beta chain, while the remainder of the serine residue undergoes an oxidative deamination to produce ammonia and the pyruvoyl prosthetic group on the alpha chain.

It is found in the cell membrane. The catalysed reaction is archaetidylserine + H(+) = archaetidylethanolamine + CO2. Catalyzes the formation of archaetidylethanolamine (PtdEtn) from archaetidylserine (PtdSer). The polypeptide is Putative archaetidylserine decarboxylase proenzyme (Archaeoglobus fulgidus (strain ATCC 49558 / DSM 4304 / JCM 9628 / NBRC 100126 / VC-16)).